The sequence spans 723 residues: DNA-binding protein RFX2 (723 aa).

The interval 1–46 (MQNSEGGADSPASVALRPSAAAPPVPASPQRVLVQAASSAPKGAQM) is disordered. Low complexity predominate over residues 10-20 (SPASVALRPSA). The residue at position 28 (serine 28) is a Phosphoserine. Positions 199–274 (HLQWLLDNYE…YHYYGIRLKP (76 aa)) form a DNA-binding region, RFX-type winged-helix. Residues 292–332 (QQPMHQKPRYRPAQKTDSLGDSGSHSSLHSTPEQTMAAQSQ) are disordered. Positions 307 to 322 (TDSLGDSGSHSSLHST) are enriched in low complexity. Residues 323 to 332 (PEQTMAAQSQ) show a composition bias toward polar residues. Serine 416 is modified (phosphoserine). Positions 689 to 723 (GDERRGSEAGPDAHSLGEPLVKRERSDPNHSLQGI) are disordered.

It belongs to the RFX family. Homodimer; probably only forms homodimers in testis. Heterodimer; heterodimerizes with RFX1 and RFX3.

It localises to the nucleus. Its subcellular location is the cytoplasm. In terms of biological role, transcription factor that acts as a key regulator of spermatogenesis. Acts by regulating expression of genes required for the haploid phase during spermiogenesis, such as genes required for cilium assembly and function. Recognizes and binds the X-box, a regulatory motif with DNA sequence 5'-GTNRCC(0-3N)RGYAAC-3' present on promoters. Probably activates transcription of the testis-specific histone gene H1-6. The protein is DNA-binding protein RFX2 (RFX2) of Macaca fascicularis (Crab-eating macaque).